The chain runs to 137 residues: 15.7 kDa heat shock protein, peroxisomal (137 aa).

A sHSP domain is found at 15–134 (QEWSRSTALI…SSKVRNVNIT (120 aa)). The Microbody targeting signal signature appears at 135–137 (SKL).

This sequence belongs to the small heat shock protein (HSP20) family. As to quaternary structure, may form oligomeric structures.

The protein localises to the peroxisome. Its function is as follows. Possesses chaperone activity. The polypeptide is 15.7 kDa heat shock protein, peroxisomal (HSP15.7) (Arabidopsis thaliana (Mouse-ear cress)).